Here is a 269-residue protein sequence, read N- to C-terminus: Kafirin PGK1 (269 aa).

A signal peptide spans 1 to 21; it reads MATKIFALLALHALLVSGTTA.

It belongs to the zein family.

Major seed storage prolamin. This chain is Kafirin PGK1, found in Sorghum bicolor (Sorghum).